Reading from the N-terminus, the 507-residue chain is TOM1-like protein 2 (507 aa).

Residues 20-152 form the VHS domain; that stretch reads ATDGSLQSED…ELKRKGVEFP (133 aa). S160 carries the post-translational modification Phosphoserine. Residues 162-210 are disordered; that stretch reads IHTPQRSVPEVDPAATMPRSQSQQRTSAGSYSSPPPAPYSAPQAPALSV. Phosphothreonine is present on T164. The 89-residue stretch at 219–307 folds into the GAT domain; the sequence is EQIARLRSEL…VFLRYERFER (89 aa). The Clathrin-binding motif lies at 329–334; that stretch reads NLIDLG. The interval 467 to 507 is disordered; sequence RAKAAEMVPDLPSPPMEAPAPASNPSGRKKPERSEDALFAL. Positions 498–507 are enriched in basic and acidic residues; the sequence is ERSEDALFAL.

Belongs to the TOM1 family. In terms of assembly, interacts with clathrin, SRC and TOLLIP. Interacts with MYO6. In terms of tissue distribution, ubiquitously expressed with higher expression in heart and skeletal muscle.

Its function is as follows. Acts as a MYO6/Myosin VI adapter protein that targets myosin VI to endocytic structures. May also play a role in recruiting clathrin to endosomes. May regulate growth factor-induced mitogenic signaling. The polypeptide is TOM1-like protein 2 (TOM1L2) (Homo sapiens (Human)).